Here is a 332-residue protein sequence, read N- to C-terminus: DNA-directed RNA polymerase subunit alpha (332 aa).

Residues 1–232 (MKGYLKDFLK…DQLSVFVDLE (232 aa)) are alpha N-terminal domain (alpha-NTD). Residues 247 to 332 (IDPVLLRPID…SLGDRARIAG (86 aa)) are alpha C-terminal domain (alpha-CTD).

The protein belongs to the RNA polymerase alpha chain family. Homodimer. The RNAP catalytic core consists of 2 alpha, 1 beta, 1 beta' and 1 omega subunit. When a sigma factor is associated with the core the holoenzyme is formed, which can initiate transcription.

The catalysed reaction is RNA(n) + a ribonucleoside 5'-triphosphate = RNA(n+1) + diphosphate. In terms of biological role, DNA-dependent RNA polymerase catalyzes the transcription of DNA into RNA using the four ribonucleoside triphosphates as substrates. This chain is DNA-directed RNA polymerase subunit alpha, found in Halorhodospira halophila (strain DSM 244 / SL1) (Ectothiorhodospira halophila (strain DSM 244 / SL1)).